Here is a 250-residue protein sequence, read N- to C-terminus: Iron-sulfur assembly protein 1 (250 aa).

The segment at 54-89 is disordered; sequence AADSVSPDSQRPGKKPFKFIVSNQSKSSKASKSPKW. The segment covering 75–89 has biased composition (low complexity); that stretch reads SNQSKSSKASKSPKW. Residues Cys-178, Cys-242, and Cys-244 each coordinate Fe cation.

Belongs to the HesB/IscA family.

The protein resides in the mitochondrion matrix. In terms of biological role, involved in the assembly of mitochondrial and cytoplasmic iron-sulfur proteins. Probably involved in the binding of an intermediate of Fe/S cluster assembly. This chain is Iron-sulfur assembly protein 1 (ISA1), found in Saccharomyces cerevisiae (strain ATCC 204508 / S288c) (Baker's yeast).